The following is a 48-amino-acid chain: Acidic phospholipase A2 (48 aa).

Ca(2+) contacts are provided by Tyr27, Gly29, and Gly31. Residues Cys28 and Cys44 are joined by a disulfide bond. His47 is an active-site residue. A Ca(2+)-binding site is contributed by Asp48.

Belongs to the phospholipase A2 family. Group II subfamily. D49 sub-subfamily. As to quaternary structure, monomer. Ca(2+) is required as a cofactor. As to expression, expressed by the venom gland.

Its subcellular location is the secreted. It catalyses the reaction a 1,2-diacyl-sn-glycero-3-phosphocholine + H2O = a 1-acyl-sn-glycero-3-phosphocholine + a fatty acid + H(+). With respect to regulation, inhibited by EDTA. Inhibited by Ba(2+), Cu(+), Fe(2+) and Zn(2+) ions and, to a lesser extent, by Mn(2+) and Mg(2+) ions. Its function is as follows. Snake venom phospholipase A2 (PLA2) that shows myotoxicity and induces paw edema in mice. Exhibits indirect hemolytic activity. Inhibits platelet aggregation induced by ADP and collagen. PLA2 catalyzes the calcium-dependent hydrolysis of the 2-acyl groups in 3-sn-phosphoglycerides. The sequence is that of Acidic phospholipase A2 from Bothrops pauloensis (Neuwied's lancehead).